The chain runs to 225 residues: Class E basic helix-loop-helix protein 23 (225 aa).

A disordered region spans residues 35 to 104 (EAARGYGTPG…PREQRSLRLS (70 aa)). One can recognise a bHLH domain in the interval 100–154 (SLRLSINARERRRMHDLNDALDGLRAVIPYAHSPSVRKLSKIATLLLAKNYILMQ).

The protein localises to the nucleus. May function as transcriptional repressor. May modulate the expression of genes required for the differentiation and/or maintenance of pancreatic and neuronal cell types. May be important for rod bipolar cell maturation. This Homo sapiens (Human) protein is Class E basic helix-loop-helix protein 23 (BHLHE23).